The sequence spans 539 residues: Netrin-G1 (539 aa).

The signal sequence occupies residues 1–28 (MYLSRFLSIHALWVTVSSVMQPYPLVWG). Cystine bridges form between cysteine 33–cysteine 50, cysteine 72–cysteine 92, and cysteine 80–cysteine 88. Residues 46 to 296 (DYMACQPEST…AISDIKVRGR (251 aa)) form the Laminin N-terminal domain. Positions 80–91 (CAMGNPYMCNNE) are NGL discriminant loop I. Asparagine 133 carries an N-linked (GlcNAc...) asparagine glycan. Residues cysteine 182 and cysteine 206 are joined by a disulfide bond. The NGL discriminant loop II stretch occupies residues 208-214 (EEYSTGY). The segment at 273-275 (EIF) is NGL discriminant loop III. Cystine bridges form between cysteine 297/cysteine 306, cysteine 299/cysteine 315, cysteine 317/cysteine 326, cysteine 329/cysteine 354, cysteine 364/cysteine 373, cysteine 366/cysteine 384, cysteine 387/cysteine 396, cysteine 399/cysteine 417, cysteine 420/cysteine 432, cysteine 422/cysteine 438, cysteine 440/cysteine 449, cysteine 452/cysteine 462, cysteine 467/cysteine 480, cysteine 474/cysteine 486, and cysteine 488/cysteine 497. Laminin EGF-like domains follow at residues 297–356 (CKCN…TCIP), 364–419 (CECF…VCIE), and 420–469 (CYCN…VCDN). Asparagine 320 carries an N-linked (GlcNAc...) asparagine glycan. N-linked (GlcNAc...) asparagine glycosylation is present at asparagine 406. A glycan (N-linked (GlcNAc...) asparagine) is linked at asparagine 433. Serine 510 carries GPI-anchor amidated serine lipidation. Residues 511 to 539 (DSGQGAPPHGSPALLLLTTLLGTASPLVF) constitute a propeptide, removed in mature form.

In terms of assembly, interacts with NGL1. In terms of processing, N-glycosylated. As to expression, highly expressed in the thalamus, with very low expression, if any, in other tissues.

It is found in the cell membrane. In terms of biological role, involved in controlling patterning and neuronal circuit formation at the laminar, cellular, subcellular and synaptic levels. Promotes neurite outgrowth of both axons and dendrites. This is Netrin-G1 (NTNG1) from Homo sapiens (Human).